The primary structure comprises 22 residues: Probable ATP-dependent Clp protease proteolytic subunit (22 aa).

This sequence belongs to the peptidase S14 family. Component of the chloroplastic Clp protease core complex.

It catalyses the reaction Hydrolysis of proteins to small peptides in the presence of ATP and magnesium. alpha-casein is the usual test substrate. In the absence of ATP, only oligopeptides shorter than five residues are hydrolyzed (such as succinyl-Leu-Tyr-|-NHMec, and Leu-Tyr-Leu-|-Tyr-Trp, in which cleavage of the -Tyr-|-Leu- and -Tyr-|-Trp bonds also occurs).. Cleaves peptides in various proteins in a process that requires ATP hydrolysis. Has a chymotrypsin-like activity. Plays a major role in the degradation of misfolded proteins. The protein is Probable ATP-dependent Clp protease proteolytic subunit of Populus euphratica (Euphrates poplar).